A 314-amino-acid chain; its full sequence is Olfactory receptor 1E5 (314 aa).

Residues 1-25 (MMGQNQTSISDFLLLGLPIQPEQQN) lie on the Extracellular side of the membrane. Asn-5 is a glycosylation site (N-linked (GlcNAc...) asparagine). The chain crosses the membrane as a helical span at residues 26–49 (LCYALFLAMYLTTLLGNLLIIVLI). The Cytoplasmic portion of the chain corresponds to 50–57 (RLDSHLHT). Residues 58–79 (PMYLFLSNLSFSDLCFSSVTIP) traverse the membrane as a helical segment. The Extracellular portion of the chain corresponds to 80–100 (KLLQNMQNQDPSIPYADCLTQ). A disulfide bridge connects residues Cys-97 and Cys-189. A helical membrane pass occupies residues 101-120 (MYFFLLFGDLESFLLVAMAY). Residues 121-139 (DRYVAICFPLHYTAIMSPM) lie on the Cytoplasmic side of the membrane. A helical membrane pass occupies residues 140 to 158 (LCLSLVALSWVLTTFHAML). The Extracellular segment spans residues 159–196 (HTLLMARLCFCADNVIPHFFCDMSALLKLACSDTRVNE). The chain crosses the membrane as a helical span at residues 197-219 (WVIFIMGGLIVVIPFLLILGSYA). Over 220 to 236 (RIVSSILKVPSSKGICK) the chain is Cytoplasmic. A helical transmembrane segment spans residues 237-260 (AFSTCGSHLSVVSLFYGTIIGLYL). At 261 to 272 (CPSANSSTLKET) the chain is on the extracellular side. Asn-265 is a glycosylation site (N-linked (GlcNAc...) asparagine). Residues 273-292 (VMAMMYTVVTPMLNPFIYSL) traverse the membrane as a helical segment. The Cytoplasmic portion of the chain corresponds to 293-314 (RNRDMKGALERVIXKRKNPFLL).

The protein belongs to the G-protein coupled receptor 1 family.

The protein localises to the cell membrane. Functionally, odorant receptor. In Pan troglodytes (Chimpanzee), this protein is Olfactory receptor 1E5 (OR1E5).